Reading from the N-terminus, the 520-residue chain is Probable kinase 098L (520 aa).

A Protein kinase domain is found at 82-393; it reads LTSVQSFGSK…NSPLLKKGFV (312 aa). Residues 88-96 and Lys111 contribute to the ATP site; that span reads FGSKSKQGI. The Proton acceptor role is filled by Asp205. Residues 416–442 are a coiled coil; it reads QTAQLIETDKEILDNLIDDLELKIVRK.

It belongs to the protein kinase superfamily.

Its function is as follows. Probable kinase. This is Probable kinase 098L from Aedes vexans (Inland floodwater mosquito).